Here is an 858-residue protein sequence, read N- to C-terminus: Chitin synthase 2 (858 aa).

The span at 1–12 shows a compositional bias: basic and acidic residues; sequence MYPEGPKPEHDQ. A disordered region spans residues 1–116; it reads MYPEGPKPEH…GQAPRRQPRR (116 aa). Over residues 15 to 24 the composition is skewed to polar residues; it reads LQDTQFSNQP. 2 stretches are compositionally biased toward pro residues: residues 52–68 and 76–89; these read AYPP…PNFP and PYPP…PVSP. 7 helical membrane-spanning segments follow: residues 500-517, 540-560, 586-606, 621-641, 665-685, 799-819, and 825-845; these read RWLN…YHWR, TYNL…FFIL, LHTV…IMAL, MVFF…ITVV, NIII…FMFL, VLAW…TTVI, and ASIY…IRFT.

The protein belongs to the chitin synthase family.

It localises to the cell membrane. The catalysed reaction is [(1-&gt;4)-N-acetyl-beta-D-glucosaminyl](n) + UDP-N-acetyl-alpha-D-glucosamine = [(1-&gt;4)-N-acetyl-beta-D-glucosaminyl](n+1) + UDP + H(+). In terms of biological role, polymerizes chitin, a structural polymer of the cell wall and septum, by transferring the sugar moiety of UDP-GlcNAc to the non-reducing end of the growing chitin polymer. This Rhizopus oligosporus (Rhizopus microsporus var. oligosporus) protein is Chitin synthase 2 (CHS2).